Reading from the N-terminus, the 84-residue chain is MAHKKAGGSSRNGRDSKGQRLGCKKFGGETVKAGNIIYRQRGTQIHPGNNVGCGKDYTLFALIEGIVTFERMGRDRKKVSVYPN.

A disordered region spans residues 1 to 24 (MAHKKAGGSSRNGRDSKGQRLGCK).

This sequence belongs to the bacterial ribosomal protein bL27 family.

The polypeptide is Large ribosomal subunit protein bL27 (Pelobacter propionicus (strain DSM 2379 / NBRC 103807 / OttBd1)).